We begin with the raw amino-acid sequence, 253 residues long: 3-deoxy-manno-octulosonate cytidylyltransferase (253 aa).

Belongs to the KdsB family.

The protein resides in the cytoplasm. It catalyses the reaction 3-deoxy-alpha-D-manno-oct-2-ulosonate + CTP = CMP-3-deoxy-beta-D-manno-octulosonate + diphosphate. It functions in the pathway nucleotide-sugar biosynthesis; CMP-3-deoxy-D-manno-octulosonate biosynthesis; CMP-3-deoxy-D-manno-octulosonate from 3-deoxy-D-manno-octulosonate and CTP: step 1/1. It participates in bacterial outer membrane biogenesis; lipopolysaccharide biosynthesis. In terms of biological role, activates KDO (a required 8-carbon sugar) for incorporation into bacterial lipopolysaccharide in Gram-negative bacteria. This is 3-deoxy-manno-octulosonate cytidylyltransferase from Aeromonas hydrophila subsp. hydrophila (strain ATCC 7966 / DSM 30187 / BCRC 13018 / CCUG 14551 / JCM 1027 / KCTC 2358 / NCIMB 9240 / NCTC 8049).